Reading from the N-terminus, the 484-residue chain is Putative tyramine receptor 2 (484 aa).

Residues 1–54 are Extracellular-facing; it reads MVRVELQAASLMNGSSAAEEPQDALVGGDACGGRRPPSVLGVRLAVPEWEVAVT. Residue asparagine 13 is glycosylated (N-linked (GlcNAc...) asparagine). The helical transmembrane segment at 55 to 77 threads the bilayer; sequence AVSLSLIILITIVGNVLVVLSVF. Residues 78 to 87 lie on the Cytoplasmic side of the membrane; it reads TYKPLRIVQN. The helical transmembrane segment at 88–109 threads the bilayer; it reads FFIVSLAVADLTVAVLVMPFNV. At 110-126 the chain is on the extracellular side; the sequence is AYSLIQRWVFGIVVCKM. Cysteine 124 and cysteine 203 are oxidised to a cystine. A helical transmembrane segment spans residues 127-147; it reads WLTCDVLCCTASILNLCAIAL. At 148-167 the chain is on the cytoplasmic side; it reads DRYWAITDPINYAQKRTLRR. Residues 168-190 traverse the membrane as a helical segment; sequence VLAMIAGVWLLSGVISSPPLIGW. The Extracellular portion of the chain corresponds to 191–215; sequence NDWPMEFNDTTPCQLTEEQGYVIYS. Asparagine 198 carries an N-linked (GlcNAc...) asparagine glycan. Residues 216–237 traverse the membrane as a helical segment; it reads SLGSFFIPLFIMTIVYVEIFIA. The Cytoplasmic portion of the chain corresponds to 238–411; that stretch reads TKRRLRERAK…LSKERRAART (174 aa). Over residues 253–280 the composition is skewed to polar residues; that stretch reads SAMKQQMAAQAVPSSVPSHDQESVSSET. Disordered stretches follow at residues 253-322 and 350-383; these read SAMK…PAMV and TTTTTTTTTTTAVTDSPRSRTASQKGSTAPPTPV. The segment covering 295-306 has biased composition (basic residues); sequence EKRRKTKKKSKK. Residues 350–360 show a composition bias toward low complexity; the sequence is TTTTTTTTTTT. The span at 361–378 shows a compositional bias: polar residues; sequence AVTDSPRSRTASQKGSTA. Residues 412–433 form a helical membrane-spanning segment; the sequence is LGIIMGVFVVCWLPFFLMYVIV. At 434–448 the chain is on the extracellular side; that stretch reads PFCNPSCKPSPKLVN. The helical transmembrane segment at 449–470 threads the bilayer; that stretch reads FITWLGYINSALNPIIYTIFNL. The Cytoplasmic portion of the chain corresponds to 471-484; it reads DFRRAFKKLLHFKT.

It belongs to the G-protein coupled receptor 1 family.

Its subcellular location is the cell membrane. G-protein coupled receptor for tyramine, a known neurotransmitter and neuromodulator and direct precursor of octopamine. The protein is Putative tyramine receptor 2 (GCR2) of Locusta migratoria (Migratory locust).